A 767-amino-acid chain; its full sequence is 5-methyltetrahydropteroyltriglutamate--homocysteine methyltransferase (767 aa).

Positions 19 and 126 each coordinate 5-methyltetrahydropteroyltri-L-glutamate. Residues 446-448 (IGS) and Glu499 contribute to the L-homocysteine site. Residues 446–448 (IGS) and Glu499 each bind L-methionine. 5-methyltetrahydropteroyltri-L-glutamate contacts are provided by residues Asp504, Tyr527, 530-531 (RY), and Trp576. Asp614 is a binding site for L-homocysteine. An L-methionine-binding site is contributed by Asp614. His657, Cys659, and Glu679 together coordinate Zn(2+). Catalysis depends on His707, which acts as the Proton donor. A Zn(2+)-binding site is contributed by Cys739.

Belongs to the vitamin-B12 independent methionine synthase family. The cofactor is Zn(2+).

It carries out the reaction 5-methyltetrahydropteroyltri-L-glutamate + L-homocysteine = tetrahydropteroyltri-L-glutamate + L-methionine. Its pathway is amino-acid biosynthesis; L-methionine biosynthesis via de novo pathway; L-methionine from L-homocysteine (MetE route): step 1/1. With respect to regulation, inhibited weakly by methotrexate. Catalyzes the transfer of a methyl group from 5-methyltetrahydrofolate to homocysteine resulting in methionine formation. The sequence is that of 5-methyltetrahydropteroyltriglutamate--homocysteine methyltransferase from Candida albicans (strain SC5314 / ATCC MYA-2876) (Yeast).